The primary structure comprises 468 residues: ATP synthase subunit beta 2 (468 aa).

ATP is bound at residue 155-162; the sequence is GGAGVGKT.

It belongs to the ATPase alpha/beta chains family. As to quaternary structure, F-type ATPases have 2 components, CF(1) - the catalytic core - and CF(0) - the membrane proton channel. CF(1) has five subunits: alpha(3), beta(3), gamma(1), delta(1), epsilon(1). CF(0) has four main subunits: a(1), b(1), b'(1) and c(9-12).

It is found in the cell inner membrane. The enzyme catalyses ATP + H2O + 4 H(+)(in) = ADP + phosphate + 5 H(+)(out). Produces ATP from ADP in the presence of a proton gradient across the membrane. The catalytic sites are hosted primarily by the beta subunits. In Chlorobium luteolum (strain DSM 273 / BCRC 81028 / 2530) (Pelodictyon luteolum), this protein is ATP synthase subunit beta 2.